The primary structure comprises 81 residues: ATP synthase subunit c (81 aa).

A run of 2 helical transmembrane segments spans residues 6–26 (AAAS…GPGI) and 57–77 (LAFM…LLFA).

It belongs to the ATPase C chain family. In terms of assembly, F-type ATPases have 2 components, F(1) - the catalytic core - and F(0) - the membrane proton channel. F(1) has five subunits: alpha(3), beta(3), gamma(1), delta(1), epsilon(1). F(0) has four main subunits: a(1), b(1), b'(1) and c(10-14). The alpha and beta chains form an alternating ring which encloses part of the gamma chain. F(1) is attached to F(0) by a central stalk formed by the gamma and epsilon chains, while a peripheral stalk is formed by the delta, b and b' chains.

It is found in the cellular thylakoid membrane. In terms of biological role, f(1)F(0) ATP synthase produces ATP from ADP in the presence of a proton or sodium gradient. F-type ATPases consist of two structural domains, F(1) containing the extramembraneous catalytic core and F(0) containing the membrane proton channel, linked together by a central stalk and a peripheral stalk. During catalysis, ATP synthesis in the catalytic domain of F(1) is coupled via a rotary mechanism of the central stalk subunits to proton translocation. Key component of the F(0) channel; it plays a direct role in translocation across the membrane. A homomeric c-ring of between 10-14 subunits forms the central stalk rotor element with the F(1) delta and epsilon subunits. The polypeptide is ATP synthase subunit c (Synechocystis sp. (strain ATCC 27184 / PCC 6803 / Kazusa)).